Here is a 178-residue protein sequence, read N- to C-terminus: Peptide methionine sulfoxide reductase MsrA (178 aa).

The active site involves Cys-11.

This sequence belongs to the MsrA Met sulfoxide reductase family.

It catalyses the reaction L-methionyl-[protein] + [thioredoxin]-disulfide + H2O = L-methionyl-(S)-S-oxide-[protein] + [thioredoxin]-dithiol. The enzyme catalyses [thioredoxin]-disulfide + L-methionine + H2O = L-methionine (S)-S-oxide + [thioredoxin]-dithiol. In terms of biological role, has an important function as a repair enzyme for proteins that have been inactivated by oxidation. Catalyzes the reversible oxidation-reduction of methionine sulfoxide in proteins to methionine. This is Peptide methionine sulfoxide reductase MsrA from Natronomonas pharaonis (strain ATCC 35678 / DSM 2160 / CIP 103997 / JCM 8858 / NBRC 14720 / NCIMB 2260 / Gabara) (Halobacterium pharaonis).